The primary structure comprises 359 residues: Histidinol-phosphate aminotransferase (359 aa).

Lysine 217 is modified (N6-(pyridoxal phosphate)lysine).

Belongs to the class-II pyridoxal-phosphate-dependent aminotransferase family. Histidinol-phosphate aminotransferase subfamily. As to quaternary structure, homodimer. Pyridoxal 5'-phosphate serves as cofactor.

It catalyses the reaction L-histidinol phosphate + 2-oxoglutarate = 3-(imidazol-4-yl)-2-oxopropyl phosphate + L-glutamate. It participates in amino-acid biosynthesis; L-histidine biosynthesis; L-histidine from 5-phospho-alpha-D-ribose 1-diphosphate: step 7/9. This chain is Histidinol-phosphate aminotransferase, found in Salmonella heidelberg (strain SL476).